We begin with the raw amino-acid sequence, 395 residues long: Elongation factor Ts, mitochondrial (395 aa).

Residues 1–63 constitute a mitochondrion transit peptide; sequence MAFARAVRRP…RGFGNFIRSF (63 aa).

This sequence belongs to the EF-Ts family.

The protein resides in the mitochondrion. Functionally, associates with the EF-Tu.GDP complex and induces the exchange of GDP to GTP. It remains bound to the aminoacyl-tRNA.EF-Tu.GTP complex up to the GTP hydrolysis stage on the ribosome. This is Elongation factor Ts, mitochondrial from Arabidopsis thaliana (Mouse-ear cress).